Reading from the N-terminus, the 179-residue chain is Large ribosomal subunit protein uL5 (179 aa).

This sequence belongs to the universal ribosomal protein uL5 family. Part of the 50S ribosomal subunit; part of the 5S rRNA/L5/L18/L25 subcomplex. Contacts the 5S rRNA and the P site tRNA. Forms a bridge to the 30S subunit in the 70S ribosome.

Its function is as follows. This is one of the proteins that bind and probably mediate the attachment of the 5S RNA into the large ribosomal subunit, where it forms part of the central protuberance. In the 70S ribosome it contacts protein S13 of the 30S subunit (bridge B1b), connecting the 2 subunits; this bridge is implicated in subunit movement. Contacts the P site tRNA; the 5S rRNA and some of its associated proteins might help stabilize positioning of ribosome-bound tRNAs. The protein is Large ribosomal subunit protein uL5 of Rickettsia peacockii (strain Rustic).